Reading from the N-terminus, the 138-residue chain is MVMTVRVIAPDKTVWDAPAEEVILPSTTGQLGILSNHAPLLTALETGVMRVRQEREWVAIALMGGFAEVENNEVTVLVNAAERGDTIDLETAKREFSEAQAAVAKAAQSGSKQAQIQAAQAFRRARARLQAAGGVVEI.

It belongs to the ATPase epsilon chain family. As to quaternary structure, F-type ATPases have 2 components, CF(1) - the catalytic core - and CF(0) - the membrane proton channel. CF(1) has five subunits: alpha(3), beta(3), gamma(1), delta(1), epsilon(1). CF(0) has three main subunits: a, b and c.

The protein localises to the cellular thylakoid membrane. Its function is as follows. Produces ATP from ADP in the presence of a proton gradient across the membrane. The protein is ATP synthase epsilon chain (atpC) of Synechococcus sp. (strain PCC 6716).